The primary structure comprises 210 residues: Protein RCR2 (210 aa).

The helical transmembrane segment at 41-61 (WIFFIFFIVALLILLFSTAKV) threads the bilayer. Residues 125–149 (PNGKTEYLAPPPLSEEQASSTDKDL) are disordered. Ser161 bears the Phosphoserine mark. A compositionally biased stretch (polar residues) spans 175-199 (NNFVNGQSNRNEQHSPTVESSSFDV). Positions 175-210 (NNFVNGQSNRNEQHSPTVESSSFDVNNAPARAKVSK) are disordered. Phosphothreonine is present on Thr191.

This sequence to yeast YBR005W.

Its subcellular location is the membrane. In Saccharomyces cerevisiae (strain ATCC 204508 / S288c) (Baker's yeast), this protein is Protein RCR2 (RCR2).